The primary structure comprises 285 residues: MNIIKNINLLEKKIKELKKKNKIIGLVPTMGNLHDGHIKLILLAKKNVDIVIVSIFINPMQFEDLLDLKKYPKTFEQDCCILKQEKVEILFCPDVNEMYPLGLKNHTYIDVPKLSKIIEGKVRPGHFIGVTTIVCKLFNLIQPNFSFFGEKDYQQLLIIKKLVKELNYPIKIISLPIIRLKNGLAFSSRNKHLSDLAQQKASYLYQAIKQTCNFIKNNNGKNIKKNIHTSRKYLIKKGFYIDIFNAYDSKTLDPISKDSKNIIIIASVWLGKIRLIDNKKIILRD.

30–37 (MGNLHDGH) contacts ATP. His-37 acts as the Proton donor in catalysis. Gln-61 serves as a coordination point for (R)-pantoate. Position 61 (Gln-61) interacts with beta-alanine. Position 149–152 (149–152 (GEKD)) interacts with ATP. Position 155 (Gln-155) interacts with (R)-pantoate. Residues Ile-178 and 186-189 (FSSR) each bind ATP.

This sequence belongs to the pantothenate synthetase family. Homodimer.

It localises to the cytoplasm. The catalysed reaction is (R)-pantoate + beta-alanine + ATP = (R)-pantothenate + AMP + diphosphate + H(+). Its pathway is cofactor biosynthesis; (R)-pantothenate biosynthesis; (R)-pantothenate from (R)-pantoate and beta-alanine: step 1/1. Functionally, catalyzes the condensation of pantoate with beta-alanine in an ATP-dependent reaction via a pantoyl-adenylate intermediate. The chain is Pantothenate synthetase from Buchnera aphidicola subsp. Schizaphis graminum (strain Sg).